The chain runs to 294 residues: MINGSIVALITPMNSDGSVDFASLERLVEFHIDQGTDAIVAVGTTGESATLPMNEHVTVVAQTVKFAAGRIPVIGGNGANATSEAIELTKSLSKVGVAAMLGVTPYYNKPTPKGLVAHYKAVAASTDIPQILYNVPGRTAVDMKPETVAELVGVSNIIGVKEATGDVSRVKRLRELCGNDFMLYSGDDATAREFLLLGGNGVISVANNIVPKAFKAMCDAALAGNAELAASIDEPLRGLYSTLFCEANPIPVKWAAHRMGLIECGHIRLPLTELSEQCHGLLLDAMTRAQIEVK.

T45 is a binding site for pyruvate. The active-site Proton donor/acceptor is the Y133. K161 functions as the Schiff-base intermediate with substrate in the catalytic mechanism. I203 is a pyruvate binding site.

This sequence belongs to the DapA family. Homotetramer; dimer of dimers.

Its subcellular location is the cytoplasm. The enzyme catalyses L-aspartate 4-semialdehyde + pyruvate = (2S,4S)-4-hydroxy-2,3,4,5-tetrahydrodipicolinate + H2O + H(+). It participates in amino-acid biosynthesis; L-lysine biosynthesis via DAP pathway; (S)-tetrahydrodipicolinate from L-aspartate: step 3/4. Catalyzes the condensation of (S)-aspartate-beta-semialdehyde [(S)-ASA] and pyruvate to 4-hydroxy-tetrahydrodipicolinate (HTPA). This is 4-hydroxy-tetrahydrodipicolinate synthase from Shewanella sp. (strain MR-7).